We begin with the raw amino-acid sequence, 181 residues long: Cytochrome b6-f complex iron-sulfur subunit (181 aa).

Residues Met1–Glu35 form a disordered region. Transmembrane regions (helical) follow at residues Val53–Val73 and Gly114–Asp134. In terms of domain architecture, Rieske spans Leu85 to Val178. [2Fe-2S] cluster-binding residues include Cys124, His126, Cys142, and His145. A disulfide bridge links Cys129 with Cys144.

It belongs to the Rieske iron-sulfur protein family. [2Fe-2S] cluster serves as cofactor.

It localises to the cell inner membrane. It carries out the reaction 2 oxidized [plastocyanin] + a plastoquinol + 2 H(+)(in) = 2 reduced [plastocyanin] + a plastoquinone + 4 H(+)(out). In terms of biological role, component of the green S-bacteria bc-complex which consists of the Rieske protein and cytochrome b subunit and which appears to lack a cytochrome c1-equivalent. This complex has a comparatively low redox potential. The sequence is that of Cytochrome b6-f complex iron-sulfur subunit (petC) from Chlorobaculum tepidum (strain ATCC 49652 / DSM 12025 / NBRC 103806 / TLS) (Chlorobium tepidum).